A 231-amino-acid polypeptide reads, in one-letter code: Biosynthetic peptidoglycan transglycosylase (231 aa).

A helical transmembrane segment spans residues leucine 12 to tryptophan 32.

It belongs to the glycosyltransferase 51 family.

It localises to the cell inner membrane. It catalyses the reaction [GlcNAc-(1-&gt;4)-Mur2Ac(oyl-L-Ala-gamma-D-Glu-L-Lys-D-Ala-D-Ala)](n)-di-trans,octa-cis-undecaprenyl diphosphate + beta-D-GlcNAc-(1-&gt;4)-Mur2Ac(oyl-L-Ala-gamma-D-Glu-L-Lys-D-Ala-D-Ala)-di-trans,octa-cis-undecaprenyl diphosphate = [GlcNAc-(1-&gt;4)-Mur2Ac(oyl-L-Ala-gamma-D-Glu-L-Lys-D-Ala-D-Ala)](n+1)-di-trans,octa-cis-undecaprenyl diphosphate + di-trans,octa-cis-undecaprenyl diphosphate + H(+). Its pathway is cell wall biogenesis; peptidoglycan biosynthesis. In terms of biological role, peptidoglycan polymerase that catalyzes glycan chain elongation from lipid-linked precursors. The protein is Biosynthetic peptidoglycan transglycosylase of Azoarcus sp. (strain BH72).